Consider the following 295-residue polypeptide: Ribosomal protein L11 methyltransferase (295 aa).

Residues T146, G167, D189, and N231 each coordinate S-adenosyl-L-methionine.

It belongs to the methyltransferase superfamily. PrmA family.

The protein localises to the cytoplasm. The enzyme catalyses L-lysyl-[protein] + 3 S-adenosyl-L-methionine = N(6),N(6),N(6)-trimethyl-L-lysyl-[protein] + 3 S-adenosyl-L-homocysteine + 3 H(+). Methylates ribosomal protein L11. This chain is Ribosomal protein L11 methyltransferase, found in Vibrio vulnificus (strain YJ016).